The primary structure comprises 975 residues: Exportin-2 (975 aa).

One can recognise an Importin N-terminal domain in the interval 29–105 (AEKLLESTEL…KTLIVTLMLH (77 aa)).

Belongs to the XPO2/CSE1 family. Binds with high affinity to importin-alpha only in the presence of RanGTP.

It is found in the cytoplasm. The protein resides in the nucleus. Functionally, export receptor for importin alpha. Mediates importin-alpha re-export from the nucleus to the cytoplasm after import substrates have been released into the nucleoplasm. The polypeptide is Exportin-2 (Drosophila melanogaster (Fruit fly)).